The chain runs to 305 residues: MSPPVSQVVVVGGTHGNEMSGVCLAKHWLQDPSELRRKSFTADILLANPIAVERCVRYIDRDLNRSFSHELLSASASESDSYEVKRAREIYQKYGPKQSSLNFVIDLHNTTSNMGTTILLFKGDNFALHLANYLKTKCVDPSFPCHILLIDIPEQGHVHLQSMGKHSISLELGPQPQGVVRTDVLARMKVLVNSSLDFLDLFNQGTEFPSFEAEVHQVLHKADFPRGADGEIQAFIHSELQDKDYLPLKPGDPIFQRLNGDDILYNGEKLIYPVFINESAYYEKKVAFIATEKKHCFVPALKLQN.

Zn(2+) is bound by residues His-15 and Glu-18. Substrate-binding positions include Arg-57 and 64-65 (NR). His-108 is a binding site for Zn(2+). Substrate is bound by residues Glu-171 and Tyr-281.

The protein belongs to the AspA/AstE family. Aspartoacylase subfamily. In terms of assembly, homotetramer. It depends on Zn(2+) as a cofactor.

It localises to the apical cell membrane. It is found in the cytoplasm. The catalysed reaction is an N-acyl-aromatic L-alpha-amino acid + H2O = an aromatic L-alpha-amino acid + a carboxylate. The enzyme catalyses an N-acetyl-L-cysteine-S-conjugate + H2O = an S-substituted L-cysteine + acetate. Functionally, plays an important role in deacetylating mercapturic acids in kidney proximal tubules. In Xenopus laevis (African clawed frog), this protein is N-acyl-aromatic-L-amino acid amidohydrolase (carboxylate-forming) (acy3).